Here is a 279-residue protein sequence, read N- to C-terminus: Thymidylate synthase (279 aa).

133-134 (RR) lines the dUMP pocket. The active-site Nucleophile is the cysteine 154. DUMP is bound by residues 178–181 (RSND), asparagine 189, and 219–221 (HIY). Residue aspartate 181 participates in (6R)-5,10-methylene-5,6,7,8-tetrahydrofolate binding. Alanine 278 is a (6R)-5,10-methylene-5,6,7,8-tetrahydrofolate binding site.

The protein belongs to the thymidylate synthase family. Bacterial-type ThyA subfamily. In terms of assembly, homodimer.

The protein localises to the cytoplasm. It catalyses the reaction dUMP + (6R)-5,10-methylene-5,6,7,8-tetrahydrofolate = 7,8-dihydrofolate + dTMP. The protein operates within pyrimidine metabolism; dTTP biosynthesis. Its function is as follows. Catalyzes the reductive methylation of 2'-deoxyuridine-5'-monophosphate (dUMP) to 2'-deoxythymidine-5'-monophosphate (dTMP) while utilizing 5,10-methylenetetrahydrofolate (mTHF) as the methyl donor and reductant in the reaction, yielding dihydrofolate (DHF) as a by-product. This enzymatic reaction provides an intracellular de novo source of dTMP, an essential precursor for DNA biosynthesis. This Streptococcus suis (strain 05ZYH33) protein is Thymidylate synthase.